The following is a 560-amino-acid chain: Factor VII-activating protease (560 aa).

The N-terminal stretch at 1-23 (MFARMSDLHVLLLMALVGKTACG) is a signal peptide. A glycan (N-linked (GlcNAc...) asparagine) is linked at N54. EGF-like domains follow at residues 73–109 (QADP…NKCQ), 111–148 (VQNT…PSCS), and 150–188 (VVPV…KFCE). Cystine bridges form between C77–C88, C82–C97, C99–C108, C115–C125, C120–C136, C138–C147, C154–C165, C159–C176, C178–C187, C194–C276, C215–C257, C246–C271, C301–C435, C347–C363, C355–C424, C447–C515, C477–C493, and C505–C533. The Kringle domain occupies 193–276 (DCYVGDGYSY…KWEYCDVSAC (84 aa)). A glycan (N-linked (GlcNAc...) asparagine) is linked at N207. The region spanning 314–555 (IYGGFKSTAG…FLNWIKATIK (242 aa)) is the Peptidase S1 domain. Catalysis depends on charge relay system residues H362 and D411. S509 acts as the Charge relay system in catalysis.

This sequence belongs to the peptidase S1 family. Heterodimer; disulfide-linked. Heterodimer of a 50 kDa heavy and a 27 kDa light chain linked by a disulfide bond. Proteolytic cleavage at Gly-23 or Met-27 can give rise to the 50 kDa heavy chain (HC) and cleavage at Arg-313 or Lys-319 can give rise to the 27 kDa light chain (LC). The HC can undergo further proteolytic cleavage giving rise to a 26 kDa fragment. The LC can undergo further proteolytic cleavage at Arg-313 leading to a 17-kDa fragment and at Arg-480 leading to a 8-kDa fragment. Ubiquitously expressed.

It localises to the secreted. Its function is as follows. Cleaves the alpha-chain at multiple sites and the beta-chain between 'Lys-53' and 'Lys-54' but not the gamma-chain of fibrinogen and therefore does not initiate the formation of the fibrin clot and does not cause the fibrinolysis directly. It does not cleave (activate) prothrombin and plasminogen but converts the inactive single chain urinary plasminogen activator (pro-urokinase) to the active two chain form. Activates coagulation factor VII. May function as a tumor suppressor negatively regulating cell proliferation and cell migration. This chain is Factor VII-activating protease, found in Homo sapiens (Human).